The primary structure comprises 55 residues: Photosystem II reaction center X protein (55 aa).

The chain crosses the membrane as a helical span at residues 24-44 (IGSFLAAAALIVVPAASFLLW).

It belongs to the PsbX family. Type 2 subfamily. In terms of assembly, PSII consists of a core antenna complex that captures photons, and an electron transfer chain that converts photonic excitation into a charge separation. PSII forms dimeric complexes.

Its subcellular location is the cellular thylakoid membrane. Functionally, involved in the binding and/or turnover of quinones at the Q(B) site of Photosystem II. This Prochlorococcus marinus (strain SARG / CCMP1375 / SS120) protein is Photosystem II reaction center X protein.